The following is a 307-amino-acid chain: Epimerase family protein ML0860 (307 aa).

It belongs to the NAD(P)-dependent epimerase/dehydratase family. SDR39U1 subfamily.

The protein is Epimerase family protein ML0860 of Mycobacterium leprae (strain TN).